We begin with the raw amino-acid sequence, 3415 residues long: Genome polyprotein (3415 aa).

The interval 1-29 (MMTTSKGKGGGPPRRKLKVTANKSRPATS) is disordered. The Cytoplasmic portion of the chain corresponds to 1–96 (MMTTSKGKGG…LHMRGRRRSG (96 aa)). Residues 95 to 115 (SGVDWTWIFLTMALMTMAMAT) constitute a propeptide, ER anchor for the capsid protein C, removed in mature form by serine protease NS3. A helical membrane pass occupies residues 97-117 (VDWTWIFLTMALMTMAMATTI). The Extracellular portion of the chain corresponds to 118–243 (HRDREGYMVM…RVEGWMWKNK (126 aa)). Asn-142 is a glycosylation site (N-linked (GlcNAc...) asparagine; by host). A helical transmembrane segment spans residues 244-260 (LLTAAIVALAWLMVDSW). Met-261 is a topological domain (cytoplasmic). A helical transmembrane segment spans residues 262–278 (ARVTVILLALSLGPVYA). Residues 279-726 (TRCTHLENRD…HTVLGGAFNT (448 aa)) lie on the Extracellular side of the membrane. Disulfide bonds link Cys-281-Cys-308, Cys-338-Cys-394, Cys-338-Cys-399, Cys-352-Cys-383, Cys-370-Cys-394, and Cys-370-Cys-399. The fusion peptide stretch occupies residues 376–389 (DRGWGNHCGFFGKG). Asn-432 is a glycosylation site (N-linked (GlcNAc...) asparagine; by host). Disulfide bonds link Cys-464–Cys-568 and Cys-585–Cys-617. The chain crosses the membrane as a helical span at residues 727–747 (LFGGVGFIPKMLLGVALVWLG). Residues 748-754 (LNARNPT) lie on the Cytoplasmic side of the membrane. Residues 755–775 (MSMTFLAVGALTLMMTMGVGA) traverse the membrane as a helical segment. Residues 776 to 1187 (DYGCAIDPER…LVRVEEIVRY (412 aa)) lie on the Extracellular side of the membrane. Disulfide bonds link Cys-779–Cys-790, Cys-830–Cys-920, Cys-955–Cys-1000, Cys-1057–Cys-1106, Cys-1068–Cys-1090, and Cys-1089–Cys-1093. N-linked (GlcNAc...) asparagine; by host glycans are attached at residues Asn-860, Asn-983, and Asn-999. The chain crosses the membrane as a helical span at residues 1188-1208 (VIAVGVTFHLELGPETMVLVM). Topologically, residues 1209–1233 (LQAVFNMRTCYLMGFLVKRVITTRE) are cytoplasmic. The helical transmembrane segment at 1234–1253 (VVTVYFLLLVLEMGIPEMNF) threads the bilayer. A topological domain (lumenal) is located at residue Gly-1254. Residues 1255–1275 (HLWEWADALAMGLLIIKASAM) traverse the membrane as a helical segment. Topologically, residues 1276–1292 (EDRRGLGFLLAGLMTQR) are cytoplasmic. The helical transmembrane segment at 1293-1313 (HLVAVHHGLMVFLTVALAVVG) threads the bilayer. At 1314 to 1327 (RNIYNGQKERKGLC) the chain is on the lumenal side. A helical transmembrane segment spans residues 1328 to 1348 (FTVPLASLLGGSGSGLRMLAL). The Cytoplasmic segment spans residues 1349–1359 (WECLGGRGRRS). Residues 1360 to 1378 (LSEPLTVVGVMLAMASGLL) traverse the membrane as a helical segment. Residues 1379–1382 (RHSS) lie on the Lumenal side of the membrane. The helical transmembrane segment at 1383 to 1403 (QEALLALSAGSFLILMLILGT) threads the bilayer. Residues 1404 to 1452 (RRLQLTAEWAGVVEWNPELVNEGGEVSLKVRQDAMGNLHLTEVEREERR) are Cytoplasmic-facing. Positions 1410–1449 (AEWAGVVEWNPELVNEGGEVSLKVRQDAMGNLHLTEVERE) are interacts with and activates NS3 protease. The helical intramembrane region spans 1453–1473 (LALWLVFGLLASAYHWSGILV). The Cytoplasmic segment spans residues 1474–2163 (TMGAWTVYEL…AERDAPEAML (690 aa)). The 180-residue stretch at 1490 to 1669 (TDLVFSGQLP…NVEKSRPEMP (180 aa)) folds into the Peptidase S7 domain. Residues His-1543, Asp-1567, and Ser-1627 each act as charge relay system; for serine protease NS3 activity in the active site. The Helicase ATP-binding domain maps to 1675 to 1832 (GKWTSKGSIT…ESKGAIVSEE (158 aa)). ATP is bound at residue 1688-1695 (MHPGSGKT). Positions 1780–1783 (DEAH) match the DEAH box motif. The Helicase C-terminal domain occupies 1842 to 2001 (DGFDWITEFE…TVRGPVATFY (160 aa)). N6-acetyllysine; by host is present on Lys-1884. The helical transmembrane segment at 2164–2184 (TLLEVAVLGIATLGVVWCFIV) threads the bilayer. At 2185 to 2190 (RTSVSR) the chain is on the lumenal side. An intramembrane region (helical) is located at residues 2191 to 2210 (MVLGTLVLAVALILLWLGGM). Residue Asp-2211 is a topological domain, lumenal. Residues 2212–2232 (YGTMAGVALIFYLLLTVLQPE) traverse the membrane as a helical segment. Residues 2233 to 2243 (PGKQRSGEDNR) lie on the Cytoplasmic side of the membrane. The chain crosses the membrane as a helical span at residues 2244 to 2264 (LAFLLIGLGSVVGLVAANELG). Residues 2265-2300 (YLEQTKTDISGLFRREDQGGMVWDAWTNIDIQPARS) lie on the Lumenal side of the membrane. The helical intramembrane region spans 2301-2321 (WGTYVLIVSLFTPYMLHQLQT). The Lumenal portion of the chain corresponds to 2322–2344 (KIQRLVNSSVAAGTQAMRDLGGG). Residues 2345 to 2365 (TPFFGVAGHVVALGVTSLVGA) constitute an intramembrane region (helical). At 2366–2369 (TPTS) the chain is on the lumenal side. A helical transmembrane segment spans residues 2370–2390 (LALGVALAALHLAVVTSGLEA). Residues 2391 to 2433 (ELTQRAHRAFFSAMVKNPMVDGEIINPIPDGDPKPALYERKMS) are Cytoplasmic-facing. A helical transmembrane segment spans residues 2434–2454 (LFLAIGLCIAAVALNRTAAAM). Over 2455–2479 (TEAGAVAVAALGQLLRPEEESWWTM) the chain is Lumenal. A helical membrane pass occupies residues 2480–2500 (PMACGMAGLVRGSLWGLLPVL). The Cytoplasmic segment spans residues 2501 to 3415 (HRIWLRTQGA…WELKLESSII (915 aa)). Residues 2513–2777 (GGAEGSTLGD…EIDLGTGTRC (265 aa)) form the mRNA cap 0-1 NS5-type MT domain. Position 2568 (Ser-2568) interacts with S-adenosyl-L-methionine. At Ser-2568 the chain carries Phosphoserine. The active-site For 2'-O-MTase activity is Lys-2573. The S-adenosyl-L-methionine site is built by Gly-2598, Trp-2599, Thr-2616, Ile-2617, Asp-2643, and Val-2644. Residue Asp-2658 is the For 2'-O-MTase activity of the active site. S-adenosyl-L-methionine is bound at residue Ile-2659. Residues Lys-2695 and Glu-2731 each act as for 2'-O-MTase activity in the active site. The tract at residues 2731–2735 (EMYYS) is interaction with host SCRIB. Tyr-2733 is a binding site for S-adenosyl-L-methionine. Glu-2951, His-2955, Cys-2960, and Cys-2963 together coordinate Zn(2+). One can recognise a RdRp catalytic domain in the interval 3041 to 3190 (GKLYADDTAG…KPIDDRFGKA (150 aa)). The Zn(2+) site is built by His-3225, Cys-3241, and Cys-3360.

In the N-terminal section; belongs to the class I-like SAM-binding methyltransferase superfamily. mRNA cap 0-1 NS5-type methyltransferase family. As to quaternary structure, homodimer. Interacts (via N-terminus) with host EXOC1 (via C-terminus); this interaction results in EXOC1 degradation through the proteasome degradation pathway. Forms heterodimers with envelope protein E in the endoplasmic reticulum and Golgi. In terms of assembly, homodimer; in the endoplasmic reticulum and Golgi. As to quaternary structure, forms homodimers as well as homohexamers. NS1 may interact with NS4A. Forms a heterodimer with serine protease NS3. May form homooligomers. In terms of assembly, forms a heterodimer with NS2B. Interacts with NS4B. Interacts with unphosphorylated RNA-directed RNA polymerase NS5; this interaction stimulates RNA-directed RNA polymerase NS5 guanylyltransferase activity. As to quaternary structure, interacts with serine protease NS3. Interacts with host STAT2; this interaction inhibits the phosphorylation of the latter, and, when all viral proteins are present (polyprotein), targets STAT2 for degradation. Specific enzymatic cleavages in vivo yield mature proteins. Cleavages in the lumen of endoplasmic reticulum are performed by host signal peptidase, whereas cleavages in the cytoplasmic side are performed by serine protease NS3. Signal cleavage at the 2K-4B site requires a prior NS3 protease-mediated cleavage at the 4A-2K site. In terms of processing, cleaved in post-Golgi vesicles by a host furin, releasing the mature small envelope protein M, and peptide pr. This cleavage is incomplete as up to 30% of viral particles still carry uncleaved prM. Post-translationally, N-glycosylated. N-glycosylated. The excreted form is glycosylated and this is required for efficient secretion of the protein from infected cells. In terms of processing, acetylated by host KAT5. Acetylation modulates NS3 RNA-binding and unwinding activities and plays an important positive role for viral replication. Post-translationally, phosphorylated on serines residues. This phosphorylation may trigger NS5 nuclear localization.

It is found in the virion. Its subcellular location is the host nucleus. The protein localises to the host cytoplasm. The protein resides in the host perinuclear region. It localises to the secreted. It is found in the virion membrane. Its subcellular location is the host endoplasmic reticulum membrane. The catalysed reaction is Selective hydrolysis of -Xaa-Xaa-|-Yaa- bonds in which each of the Xaa can be either Arg or Lys and Yaa can be either Ser or Ala.. It catalyses the reaction RNA(n) + a ribonucleoside 5'-triphosphate = RNA(n+1) + diphosphate. It carries out the reaction a ribonucleoside 5'-triphosphate + H2O = a ribonucleoside 5'-diphosphate + phosphate + H(+). The enzyme catalyses ATP + H2O = ADP + phosphate + H(+). The catalysed reaction is a 5'-end (5'-triphosphoguanosine)-ribonucleoside in mRNA + S-adenosyl-L-methionine = a 5'-end (N(7)-methyl 5'-triphosphoguanosine)-ribonucleoside in mRNA + S-adenosyl-L-homocysteine. It catalyses the reaction a 5'-end (N(7)-methyl 5'-triphosphoguanosine)-ribonucleoside in mRNA + S-adenosyl-L-methionine = a 5'-end (N(7)-methyl 5'-triphosphoguanosine)-(2'-O-methyl-ribonucleoside) in mRNA + S-adenosyl-L-homocysteine + H(+). Plays a role in virus budding by binding to the cell membrane and gathering the viral RNA into a nucleocapsid that forms the core of a mature virus particle. During virus entry, may induce genome penetration into the host cytoplasm after hemifusion induced by the surface proteins. Can migrate to the cell nucleus where it modulates host functions. In terms of biological role, inhibits RNA silencing by interfering with host Dicer. Its function is as follows. Prevents premature fusion activity of envelope proteins in trans-Golgi by binding to envelope protein E at pH6.0. After virion release in extracellular space, gets dissociated from E dimers. Functionally, acts as a chaperone for envelope protein E during intracellular virion assembly by masking and inactivating envelope protein E fusion peptide. prM is the only viral peptide matured by host furin in the trans-Golgi network probably to avoid catastrophic activation of the viral fusion activity in acidic Golgi compartment prior to virion release. prM-E cleavage is inefficient, and many virions are only partially matured. These uncleaved prM would play a role in immune evasion. May play a role in virus budding. Exerts cytotoxic effects by activating a mitochondrial apoptotic pathway through M ectodomain. May display a viroporin activity. In terms of biological role, binds to host cell surface receptor and mediates fusion between viral and cellular membranes. Envelope protein is synthesized in the endoplasmic reticulum in the form of heterodimer with protein prM. They play a role in virion budding in the ER, and the newly formed immature particle is covered with 60 spikes composed of heterodimer between precursor prM and envelope protein E. The virion is transported to the Golgi apparatus where the low pH causes dissociation of PrM-E heterodimers and formation of E homodimers. prM-E cleavage is inefficient, and many virions are only partially matured. These uncleaved prM would play a role in immune evasion. Its function is as follows. Involved in immune evasion, pathogenesis and viral replication. Once cleaved off the polyprotein, is targeted to three destinations: the viral replication cycle, the plasma membrane and the extracellular compartment. Essential for viral replication. Required for formation of the replication complex and recruitment of other non-structural proteins to the ER-derived membrane structures. Excreted as a hexameric lipoparticle that plays a role against host immune response. Antagonizing the complement function. Binds to the host macrophages and dendritic cells. Inhibits signal transduction originating from Toll-like receptor 3 (TLR3). Functionally, component of the viral RNA replication complex that functions in virion assembly and antagonizes the host immune response. Required cofactor for the serine protease function of NS3. May have membrane-destabilizing activity and form viroporins. In terms of biological role, displays three enzymatic activities: serine protease, NTPase and RNA helicase. NS3 serine protease, in association with NS2B, performs its autocleavage and cleaves the polyprotein at dibasic sites in the cytoplasm: C-prM, NS2A-NS2B, NS2B-NS3, NS3-NS4A, NS4A-2K and NS4B-NS5. NS3 RNA helicase binds RNA and unwinds dsRNA in the 3' to 5' direction. Its function is as follows. Regulates the ATPase activity of the NS3 helicase activity. NS4A allows NS3 helicase to conserve energy during unwinding. Functionally, functions as a signal peptide for NS4B and is required for the interferon antagonism activity of the latter. Induces the formation of ER-derived membrane vesicles where the viral replication takes place. Inhibits interferon (IFN)-induced host STAT1 phosphorylation and nuclear translocation, thereby preventing the establishment of cellular antiviral state by blocking the IFN-alpha/beta pathway. Inhibits STAT2 translocation in the nucleus after IFN-alpha treatment. In terms of biological role, replicates the viral (+) and (-) RNA genome, and performs the capping of genomes in the cytoplasm. NS5 methylates viral RNA cap at guanine N-7 and ribose 2'-O positions. Besides its role in RNA genome replication, also prevents the establishment of cellular antiviral state by blocking the interferon-alpha/beta (IFN-alpha/beta) signaling pathway. Inhibits host TYK2 and STAT2 phosphorylation, thereby preventing activation of JAK-STAT signaling pathway. The sequence is that of Genome polyprotein from Tick-borne powassan virus (strain LB) (POWV).